We begin with the raw amino-acid sequence, 197 residues long: Holliday junction branch migration complex subunit RuvA (197 aa).

Residues 1–63 (MYAYLKGIIT…EDAHLLYGFR (63 aa)) are domain I. Residues 64–142 (SEDEKKLFLS…VAGDGLPAKV (79 aa)) form a domain II region. The flexible linker stretch occupies residues 143-147 (AVQAS). The segment at 148–197 (AENQELEEAMEAMLALGYKATELKKIKKFFEGTTDTAENYIKSALKMLVK) is domain III.

It belongs to the RuvA family. Homotetramer. Forms an RuvA(8)-RuvB(12)-Holliday junction (HJ) complex. HJ DNA is sandwiched between 2 RuvA tetramers; dsDNA enters through RuvA and exits via RuvB. An RuvB hexamer assembles on each DNA strand where it exits the tetramer. Each RuvB hexamer is contacted by two RuvA subunits (via domain III) on 2 adjacent RuvB subunits; this complex drives branch migration. In the full resolvosome a probable DNA-RuvA(4)-RuvB(12)-RuvC(2) complex forms which resolves the HJ.

It is found in the cytoplasm. The RuvA-RuvB-RuvC complex processes Holliday junction (HJ) DNA during genetic recombination and DNA repair, while the RuvA-RuvB complex plays an important role in the rescue of blocked DNA replication forks via replication fork reversal (RFR). RuvA specifically binds to HJ cruciform DNA, conferring on it an open structure. The RuvB hexamer acts as an ATP-dependent pump, pulling dsDNA into and through the RuvAB complex. HJ branch migration allows RuvC to scan DNA until it finds its consensus sequence, where it cleaves and resolves the cruciform DNA. The protein is Holliday junction branch migration complex subunit RuvA of Streptococcus pneumoniae serotype 2 (strain D39 / NCTC 7466).